A 228-amino-acid chain; its full sequence is Octanoyltransferase (228 aa).

The region spanning 30–214 is the BPL/LPL catalytic domain; it reads KKIGDTLLLL…YFGKVFGKSL (185 aa). Substrate contacts are provided by residues 75–82, 144–146, and 157–159; these read RGGDVTYH, AIG, and GFA. C175 (acyl-thioester intermediate) is an active-site residue.

This sequence belongs to the LipB family.

It is found in the cytoplasm. The catalysed reaction is octanoyl-[ACP] + L-lysyl-[protein] = N(6)-octanoyl-L-lysyl-[protein] + holo-[ACP] + H(+). The protein operates within protein modification; protein lipoylation via endogenous pathway; protein N(6)-(lipoyl)lysine from octanoyl-[acyl-carrier-protein]: step 1/2. Catalyzes the transfer of endogenously produced octanoic acid from octanoyl-acyl-carrier-protein onto the lipoyl domains of lipoate-dependent enzymes. Lipoyl-ACP can also act as a substrate although octanoyl-ACP is likely to be the physiological substrate. This is Octanoyltransferase from Caldicellulosiruptor bescii (strain ATCC BAA-1888 / DSM 6725 / KCTC 15123 / Z-1320) (Anaerocellum thermophilum).